The sequence spans 481 residues: UDP-N-acetylmuramoyl-L-alanyl-D-glutamate--L-lysine ligase (481 aa).

Position 42 (Ser42) interacts with UDP-N-acetyl-alpha-D-muramoyl-L-alanyl-D-glutamate. Position 118 to 124 (118 to 124) interacts with ATP; sequence GTKGKTT. Residues Gln158, 160–161, Ser187, and Arg195 contribute to the UDP-N-acetyl-alpha-D-muramoyl-L-alanyl-D-glutamate site; that span reads TT. At Lys229 the chain carries N6-carboxylysine. An L-lysine recognition motif motif is present at residues 404-407; the sequence is DDPN.

This sequence belongs to the MurCDEF family. MurE subfamily. In terms of processing, carboxylation is probably crucial for Mg(2+) binding and, consequently, for the gamma-phosphate positioning of ATP.

It localises to the cytoplasm. It carries out the reaction UDP-N-acetyl-alpha-D-muramoyl-L-alanyl-D-glutamate + L-lysine + ATP = UDP-N-acetyl-alpha-D-muramoyl-L-alanyl-gamma-D-glutamyl-L-lysine + ADP + phosphate + H(+). The protein operates within cell wall biogenesis; peptidoglycan biosynthesis. Its function is as follows. Catalyzes the addition of L-lysine to the nucleotide precursor UDP-N-acetylmuramoyl-L-alanyl-D-glutamate (UMAG) in the biosynthesis of bacterial cell-wall peptidoglycan. This is UDP-N-acetylmuramoyl-L-alanyl-D-glutamate--L-lysine ligase from Streptococcus pyogenes serotype M6 (strain ATCC BAA-946 / MGAS10394).